Here is a 72-residue protein sequence, read N- to C-terminus: ATP synthase subunit c (72 aa).

The next 2 helical transmembrane spans lie at 1–21 (MSLGVLAAAIAVGLGALGAGI) and 48–68 (MFIGVALVEALPIIGVVFSFI).

The protein belongs to the ATPase C chain family. In terms of assembly, F-type ATPases have 2 components, F(1) - the catalytic core - and F(0) - the membrane proton channel. F(1) has five subunits: alpha(3), beta(3), gamma(1), delta(1), epsilon(1). F(0) has three main subunits: a(1), b(2) and c(10-14). The alpha and beta chains form an alternating ring which encloses part of the gamma chain. F(1) is attached to F(0) by a central stalk formed by the gamma and epsilon chains, while a peripheral stalk is formed by the delta and b chains.

It is found in the cell membrane. Its function is as follows. F(1)F(0) ATP synthase produces ATP from ADP in the presence of a proton or sodium gradient. F-type ATPases consist of two structural domains, F(1) containing the extramembraneous catalytic core and F(0) containing the membrane proton channel, linked together by a central stalk and a peripheral stalk. During catalysis, ATP synthesis in the catalytic domain of F(1) is coupled via a rotary mechanism of the central stalk subunits to proton translocation. Functionally, key component of the F(0) channel; it plays a direct role in translocation across the membrane. A homomeric c-ring of between 10-14 subunits forms the central stalk rotor element with the F(1) delta and epsilon subunits. In Bacillus caldotenax, this protein is ATP synthase subunit c.